The following is a 210-amino-acid chain: Acyl-homoserine-lactone synthase (210 aa).

The protein belongs to the autoinducer synthase family.

The enzyme catalyses a fatty acyl-[ACP] + S-adenosyl-L-methionine = an N-acyl-L-homoserine lactone + S-methyl-5'-thioadenosine + holo-[ACP] + H(+). In terms of biological role, required for the synthesis of OHHL (N-(3-oxohexanoyl)-L-homoserine lactone), an autoinducer molecule which binds to EsaR. OHHL is necessary for biosynthesis of EPS virulence factor (extracellular heteropolysaccharide) which plays a role in the development of Stewart's wilt on sweet corn. This Pantoea stewartii subsp. stewartii (Erwinia stewartii) protein is Acyl-homoserine-lactone synthase (esaI).